Consider the following 252-residue polypeptide: Small ribosomal subunit protein eS1A (252 aa).

Ala2 is modified (N-acetylalanine; partial).

Belongs to the eukaryotic ribosomal protein eS1 family. As to quaternary structure, component of the small ribosomal subunit (SSU). Mature yeast ribosomes consist of a small (40S) and a large (60S) subunit. The 40S small subunit contains 1 molecule of ribosomal RNA (18S rRNA) and at least 33 different proteins. The large 60S subunit contains 3 rRNA molecules (25S, 5.8S and 5S rRNA) and at least 46 different proteins. eS1 interacts directly with uS11 and eS26, which form part of the mRNA exit tunnel.

Its subcellular location is the cytoplasm. Component of the ribosome, a large ribonucleoprotein complex responsible for the synthesis of proteins in the cell. The small ribosomal subunit (SSU) binds messenger RNAs (mRNAs) and translates the encoded message by selecting cognate aminoacyl-transfer RNA (tRNA) molecules. The large subunit (LSU) contains the ribosomal catalytic site termed the peptidyl transferase center (PTC), which catalyzes the formation of peptide bonds, thereby polymerizing the amino acids delivered by tRNAs into a polypeptide chain. The nascent polypeptides leave the ribosome through a tunnel in the LSU and interact with protein factors that function in enzymatic processing, targeting, and the membrane insertion of nascent chains at the exit of the ribosomal tunnel. The protein is Small ribosomal subunit protein eS1A (rps101) of Schizosaccharomyces pombe (strain 972 / ATCC 24843) (Fission yeast).